The chain runs to 37 residues: Large ribosomal subunit protein bL36 (37 aa).

Belongs to the bacterial ribosomal protein bL36 family.

The polypeptide is Large ribosomal subunit protein bL36 (Mycoplasma pneumoniae (strain ATCC 29342 / M129 / Subtype 1) (Mycoplasmoides pneumoniae)).